We begin with the raw amino-acid sequence, 938 residues long: Isoleucine--tRNA ligase (938 aa).

A 'HIGH' region motif is present at residues Pro-58–His-68. At Lys-183 the chain carries N6-acetyllysine. Glu-561 is a binding site for L-isoleucyl-5'-AMP. The 'KMSKS' region motif lies at Lys-602–Ser-606. Residue Lys-605 participates in ATP binding. Positions 901, 904, 921, and 924 each coordinate Zn(2+).

Belongs to the class-I aminoacyl-tRNA synthetase family. IleS type 1 subfamily. In terms of assembly, monomer. It depends on Zn(2+) as a cofactor.

It is found in the cytoplasm. The enzyme catalyses tRNA(Ile) + L-isoleucine + ATP = L-isoleucyl-tRNA(Ile) + AMP + diphosphate. Its function is as follows. Catalyzes the attachment of isoleucine to tRNA(Ile). As IleRS can inadvertently accommodate and process structurally similar amino acids such as valine, to avoid such errors it has two additional distinct tRNA(Ile)-dependent editing activities. One activity is designated as 'pretransfer' editing and involves the hydrolysis of activated Val-AMP. The other activity is designated 'posttransfer' editing and involves deacylation of mischarged Val-tRNA(Ile). The sequence is that of Isoleucine--tRNA ligase from Shigella boydii serotype 4 (strain Sb227).